We begin with the raw amino-acid sequence, 228 residues long: Lipoprotein-releasing system ATP-binding protein LolD (228 aa).

Residues 6–228 enclose the ABC transporter domain; that stretch reads IKCINLNKSY…ENNQIFNYES (223 aa). 42–49 contributes to the ATP binding site; the sequence is GKSGSGKT.

Belongs to the ABC transporter superfamily. Lipoprotein translocase (TC 3.A.1.125) family.

The protein resides in the cell inner membrane. Its function is as follows. Usually LolD forms an ABC transporter complex with LolC and LolE involved in the translocation of lipoprotein, in an ATP-dependent manner. However, LolE is certainly not functional as it is frameshifted. This is Lipoprotein-releasing system ATP-binding protein LolD from Buchnera aphidicola subsp. Acyrthosiphon pisum (strain APS) (Acyrthosiphon pisum symbiotic bacterium).